The primary structure comprises 618 residues: MNPIRSVKEEFCEIVANGLGISKDVIFKTLEYPPREELGDISLPLPSLKLNVRTEVTFSHGKLIKEVRKTGIYVNAFVDEKELFKLLFTEMQDDYGVEKTENPKRIVVEHTSANPIHPLHIGHLRNSILGDTISRMLKIRGHDVNRRFYVNDAGRQVAILTLGYILLGEPEPSPKVDHWFGLIYSITNVIIEIRELKEELKKDLDPDTYKDKINRLDELVATAQSLRERNPEFFDKLADAINSIPDVESEIQKIIKSYEKGDDPKIKQIVRKIVNLNLDGFRESLDKLEISFDVYDYESELLWSGMVDEILSKAFQIAKDYKGTKALELEDINEKIKEILNIPKGLKLPPLVLTRSDGTSLYTTRDIAYTVKKFSDFKADTVINVIAEQQSIPQMQLRASLYLLGYERLAQNLVHYSYGMVNLQGMRMSGRLGRFISLDDVIEKVSEVAKKKIEEKSGDITNLRDIVNSAIRYAILSVASNKPVTFNINNIVDFEQNSGPYLQYTYARAYNILAKNQDEIKLTDADLSDLIGDKRRLLLLIARFPETFNKAIDELRPEDLIDFLRRTADVFNRWYNFERVLQEPDYRKRITRLFIVKGIERVLYNGLNALGIKPLSKM.

The short motif at 113 to 123 (ANPIHPLHIGH) is the 'HIGH' region element.

It belongs to the class-I aminoacyl-tRNA synthetase family.

It localises to the cytoplasm. It catalyses the reaction tRNA(Arg) + L-arginine + ATP = L-arginyl-tRNA(Arg) + AMP + diphosphate. In Sulfolobus acidocaldarius (strain ATCC 33909 / DSM 639 / JCM 8929 / NBRC 15157 / NCIMB 11770), this protein is Arginine--tRNA ligase.